The following is a 332-amino-acid chain: MIDPRLPLTDIHRHLDGNIRAQTILDLGRQFNLSLPADELEALRPHVQITKTEPDLVSFLQKLDWGVAVLGSLEACRRVAYENVEDAANAGLHYAELRFSPFYMAMKHQLPVAGVVEAVIDGIQSGCRDFDIDIRLIGILSRTFGEQACLQELDGLLAHRDAITALDLAGDELGFPGGLFRSHFNRARDAGWRITVHAGEAAGPESIWQAIRELGAERIGHGVKAVEDIKLMDYLAEHNIGIESCLTSNIQTSTVASLAAHPLATFLRHGVLASINTDDPAVQGIEIANEYHIAAPAAGLTPQEIRQAQENGLTMAFISEQEKQVLRDKIRN.

Residues His-12 and His-14 each coordinate Zn(2+). Positions 14, 16, and 170 each coordinate substrate. Position 197 (His-197) interacts with Zn(2+). Residue Glu-200 is the Proton donor of the active site. Asp-278 provides a ligand contact to Zn(2+). Asp-279 provides a ligand contact to substrate.

It belongs to the metallo-dependent hydrolases superfamily. Adenosine and AMP deaminases family. Adenosine deaminase subfamily. Zn(2+) serves as cofactor.

The enzyme catalyses adenosine + H2O + H(+) = inosine + NH4(+). The catalysed reaction is 2'-deoxyadenosine + H2O + H(+) = 2'-deoxyinosine + NH4(+). In terms of biological role, catalyzes the hydrolytic deamination of adenosine and 2-deoxyadenosine. The sequence is that of Adenosine deaminase from Yersinia enterocolitica serotype O:8 / biotype 1B (strain NCTC 13174 / 8081).